The sequence spans 246 residues: 1-(5-phosphoribosyl)-5-[(5-phosphoribosylamino)methylideneamino] imidazole-4-carboxamide isomerase (246 aa).

The active-site Proton acceptor is the Asp-7. Catalysis depends on Asp-129, which acts as the Proton donor.

The protein belongs to the HisA/HisF family.

The protein localises to the cytoplasm. It carries out the reaction 1-(5-phospho-beta-D-ribosyl)-5-[(5-phospho-beta-D-ribosylamino)methylideneamino]imidazole-4-carboxamide = 5-[(5-phospho-1-deoxy-D-ribulos-1-ylimino)methylamino]-1-(5-phospho-beta-D-ribosyl)imidazole-4-carboxamide. The protein operates within amino-acid biosynthesis; L-histidine biosynthesis; L-histidine from 5-phospho-alpha-D-ribose 1-diphosphate: step 4/9. The chain is 1-(5-phosphoribosyl)-5-[(5-phosphoribosylamino)methylideneamino] imidazole-4-carboxamide isomerase from Shewanella sediminis (strain HAW-EB3).